The primary structure comprises 176 residues: NAD(P)H-quinone oxidoreductase subunit 6, chloroplastic (176 aa).

5 helical membrane-spanning segments follow: residues 10–30 (ILVLFGGFVLLLGGLGVVLLT), 33–53 (TFSAFSLGLVLVCISLFYILL), 60–80 (VAQLLIYVGAINVLIIFAVMF), 92–112 (FWTIGDGFTSLVCITIPFSLM), and 152–172 (FYLPFELISIILLVSLIGAIT).

The protein belongs to the complex I subunit 6 family. NDH is composed of at least 16 different subunits, 5 of which are encoded in the nucleus.

The protein localises to the plastid. It is found in the chloroplast thylakoid membrane. It catalyses the reaction a plastoquinone + NADH + (n+1) H(+)(in) = a plastoquinol + NAD(+) + n H(+)(out). The enzyme catalyses a plastoquinone + NADPH + (n+1) H(+)(in) = a plastoquinol + NADP(+) + n H(+)(out). Functionally, NDH shuttles electrons from NAD(P)H:plastoquinone, via FMN and iron-sulfur (Fe-S) centers, to quinones in the photosynthetic chain and possibly in a chloroplast respiratory chain. The immediate electron acceptor for the enzyme in this species is believed to be plastoquinone. Couples the redox reaction to proton translocation, and thus conserves the redox energy in a proton gradient. The chain is NAD(P)H-quinone oxidoreductase subunit 6, chloroplastic (ndhG) from Oryza nivara (Indian wild rice).